The following is a 352-amino-acid chain: (2E,6E)-farnesyl diphosphate synthase (352 aa).

Isopentenyl diphosphate contacts are provided by Lys-43, Arg-46, and His-77. The Mg(2+) site is built by Asp-84 and Asp-88. A DDXXD motif motif is present at residues 84 to 88; sequence DDLID. Position 94 (Arg-94) interacts with isopentenyl diphosphate. A DDXXD motif motif is present at residues 236–240; it reads DDVLG.

Belongs to the FPP/GGPP synthase family. Requires Mg(2+) as cofactor.

The catalysed reaction is isopentenyl diphosphate + dimethylallyl diphosphate = (2E)-geranyl diphosphate + diphosphate. It carries out the reaction isopentenyl diphosphate + (2E)-geranyl diphosphate = (2E,6E)-farnesyl diphosphate + diphosphate. The protein operates within isoprenoid biosynthesis; geranyl diphosphate biosynthesis; geranyl diphosphate from dimethylallyl diphosphate and isopentenyl diphosphate: step 1/1. It participates in isoprenoid biosynthesis; farnesyl diphosphate biosynthesis; farnesyl diphosphate from geranyl diphosphate and isopentenyl diphosphate. Catalyzes the sequential condensations of isopentenyl pyrophosphate (IPP) with dimethylallyl diphosphate (DMAPP) to yield geranyl diphosphate (GPP) and with GPP to yield (2E,6E)-farnesyl diphosphate (E,E-FPP). The polypeptide is (2E,6E)-farnesyl diphosphate synthase (Mycobacterium tuberculosis (strain ATCC 25618 / H37Rv)).